The chain runs to 170 residues: Shikimate kinase (170 aa).

11–16 contributes to the ATP binding site; that stretch reads LSGKST. A Mg(2+)-binding site is contributed by Ser-15. Substrate-binding residues include Asp-33, Arg-57, and Gly-79. Residue Arg-119 coordinates ATP. Arg-137 is a substrate binding site.

Belongs to the shikimate kinase family. As to quaternary structure, monomer. Mg(2+) serves as cofactor.

It localises to the cytoplasm. It carries out the reaction shikimate + ATP = 3-phosphoshikimate + ADP + H(+). Its pathway is metabolic intermediate biosynthesis; chorismate biosynthesis; chorismate from D-erythrose 4-phosphate and phosphoenolpyruvate: step 5/7. Catalyzes the specific phosphorylation of the 3-hydroxyl group of shikimic acid using ATP as a cosubstrate. In Clostridium botulinum (strain 657 / Type Ba4), this protein is Shikimate kinase.